A 459-amino-acid polypeptide reads, in one-letter code: Vanillin aminotransferase (459 aa).

Pyridoxal 5'-phosphate contacts are provided by residues 115–116 (GS) and D255. An N6-(pyridoxal phosphate)lysine modification is found at K284. Residue 320-321 (FT) participates in pyridoxal 5'-phosphate binding. A coiled-coil region spans residues 430 to 457 (LEELDELIRIYGKALKDTEKRVEELKSQ).

Belongs to the class-III pyridoxal-phosphate-dependent aminotransferase family. Confined to the placenta of green fruits at high levels. Barely detectable in the pericarp and seeds as well as in the placenta of mature fruits.

The catalysed reaction is vanillin + L-alanine = vanillylamine + pyruvate. Its pathway is aromatic compound metabolism; phenylpropanoid biosynthesis. Involved in the biosynthesis of capsaicinoids natural products, pungent alkaloids synthesized from phenylpropanoid intermediates in the placental tissue of chili pepper fruit acting as repellant on herbivorous mammals and conferring spiciness to hot peppers. Can transfer an amine from vanillylamine to pyruvate forming vanillin and L-alanine. The chain is Vanillin aminotransferase from Capsicum annuum (Capsicum pepper).